The primary structure comprises 363 residues: NADH-quinone oxidoreductase subunit H (363 aa).

The next 9 helical transmembrane spans lie at 62–82 (GPMYVGMGIFQAFADVFKLLF), 96–116 (FVIAPLLTLAPAFAAWSVVPF), 127–147 (VGLLYLLAMTSLGVYGIILAG), 163–183 (AAQVVSYEIAMGFALVGVMIA), 202–222 (FFDWFLIPLFPLFIVYWVSGV), 238–257 (EIVAGHMVEYSGGAFALFFL), 264–286 (ILVSFLISIFFLGGWLSPIQGWV), 299–319 (KGGWPWLLMKVFFFASAYIWF), and 339–359 (FIPLTIVWIAVTALMVFYGVI).

Belongs to the complex I subunit 1 family. NDH-1 is composed of 14 different subunits. Subunits NuoA, H, J, K, L, M, N constitute the membrane sector of the complex.

The protein resides in the cell inner membrane. The enzyme catalyses a quinone + NADH + 5 H(+)(in) = a quinol + NAD(+) + 4 H(+)(out). Its function is as follows. NDH-1 shuttles electrons from NADH, via FMN and iron-sulfur (Fe-S) centers, to quinones in the respiratory chain. The immediate electron acceptor for the enzyme in this species is believed to be ubiquinone. Couples the redox reaction to proton translocation (for every two electrons transferred, four hydrogen ions are translocated across the cytoplasmic membrane), and thus conserves the redox energy in a proton gradient. This subunit may bind ubiquinone. The chain is NADH-quinone oxidoreductase subunit H from Xanthomonas axonopodis pv. citri (strain 306).